The primary structure comprises 290 residues: UPF0761 membrane protein YihY (290 aa).

The next 6 helical transmembrane spans lie at 44–64 (LLSL…FPMF), 104–124 (VGAC…DSAL), 140–160 (FAVY…SLAI), 183–203 (IFPL…VPTI), 210–230 (AIVG…GFAL), and 244–264 (VLAV…IVLL).

This sequence belongs to the UPF0761 family.

It localises to the cell inner membrane. This chain is UPF0761 membrane protein YihY, found in Escherichia coli O1:K1 / APEC.